Here is a 3072-residue protein sequence, read N- to C-terminus: E1A-binding protein p400 (3072 aa).

Residues 1–22 show a composition bias toward polar residues; the sequence is MHHGSGPQNVQHQLQRSRSFTG. Disordered regions lie at residues 1 to 55, 125 to 149, and 222 to 250; these read MHHG…SPGY, PMSQ…LQNV, and LSQP…TGLQ. Over residues 31–40 the composition is skewed to pro residues; the sequence is PNLPPSPAAP. 2 stretches are compositionally biased toward low complexity: residues 41-53 and 125-136; these read FAPS…PQSP and PMSQQVQTQSPT. 2 positions are modified to phosphoserine: serine 52 and serine 134. Residues serine 315 and serine 321 each carry the phosphoserine modification. Disordered regions lie at residues 485-519, 544-601, and 635-769; these read SLTG…KRPR, MPTV…ASVP, and APIP…SQDK. The span at 556-569 shows a compositional bias: low complexity; it reads QATQLTGQKQSQQQ. Residues 570–583 are compositionally biased toward polar residues; the sequence is YDPSTGPPVQNAAS. Residues 586 to 599 show a composition bias toward pro residues; it reads TPPPQLPARLPPAS. Composition is skewed to low complexity over residues 646–657, 668–682, and 695–710; these read PAPSSQPAQPAL, QTSQ…VAST, and SLPT…PVSG. Polar residues-rich tracts occupy residues 724-741 and 754-765; these read NRPS…TSRS and SPAQNAASSQDG. 3 positions are modified to phosphoserine: serine 735, serine 741, and serine 754. An HSA domain is found at 798 to 870; it reads LPKLQEAPRP…EQSRLRRIAA (73 aa). A compositionally biased stretch (basic and acidic residues) spans 914-928; that stretch reads ESRLKGFDTSPEHSL. 2 disordered regions span residues 914–952 and 997–1024; these read ESRL…EDEE and FQWP…DRES. Threonine 922 carries the phosphothreonine modification. Phosphoserine occurs at positions 923, 927, and 940. Phosphothreonine is present on threonine 944. Residues 950 to 1364 form an interactions with RUVBL1 and RUVBL2 region; that stretch reads DEEETIEEEE…SVLSVLTRLQ (415 aa). Residues serine 1009 and serine 1010 each carry the phosphoserine modification. In terms of domain architecture, Helicase ATP-binding spans 1102–1267; it reads AKLYRKNLNG…WTMVHFLIPG (166 aa). 1115–1122 contacts ATP; that stretch reads DEAGLGKT. Positions 1218-1221 match the DEAD box-like motif; sequence DEMQ. Position 1471 is an N6-acetyllysine (lysine 1471). Residues 1473–1503 form a disordered region; it reads EGRTVAFPSTHPPRMANTNTSTATPQGQVRG. The segment covering 1488-1499 has biased composition (polar residues); that stretch reads ANTNTSTATPQG. 2 positions are modified to phosphoserine: serine 1646 and serine 1650. The 158-residue stretch at 1815–1972 folds into the Helicase C-terminal domain; the sequence is KLEALAILLQ…GNDYSMAFLT (158 aa). Disordered stretches follow at residues 2033-2062 and 2203-2227; these read AQRS…DEEP and KERK…GEAV. Residues 2043 to 2053 show a composition bias toward low complexity; sequence GSSSVAVSSDS. N6-acetyllysine is present on residues lysine 2265 and lysine 2272. Residues 2276-2345 enclose the Myb-like domain; that stretch reads EPAQDSPDWL…QCRNRYENVI (70 aa). An interaction with ZNF42 region spans residues 2440–2699; it reads KEKKALADQQ…QQQQQQQQQT (260 aa). A disordered region spans residues 2441 to 2534; it reads EKKALADQQK…PQSKGQPTMT (94 aa). Low complexity-rich tracts occupy residues 2446 to 2455 and 2463 to 2478; these read ADQQKAQQPP and QQQQ…QQQQ. Pro residues predominate over residues 2479-2493; the sequence is QPPPPPQQPPPPVPQ. The span at 2494–2526 shows a compositional bias: low complexity; the sequence is PQAASSQTPAGQPAVQPQPQPQVQTQPQPVQPQ. The residue at position 2614 (serine 2614) is a Phosphoserine. Disordered regions lie at residues 2734-2790 and 3028-3072; these read QKMQ…TGTT and ASLQ…PPCQ. Pro residues predominate over residues 2739–2754; that stretch reads PPQPPPPQAQPGPPQQ. Residues 2755–2775 show a composition bias toward low complexity; it reads PAQVQVQTPQPPQQQQSPQLT. Over residues 3042–3053 the composition is skewed to polar residues; sequence PASSDSPSQQPK.

The protein belongs to the SNF2/RAD54 helicase family. SWR1 subfamily. As to quaternary structure, component of the NuA4 histone acetyltransferase complex which contains the catalytic subunit KAT5/TIP60 and the subunits EP400, TRRAP/PAF400, BRD8/SMAP, EPC1, DMAP1/DNMAP1, RUVBL1/TIP49, RUVBL2, ING3, actin, ACTL6A/BAF53A, MORF4L1/MRG15, MORF4L2/MRGX, MRGBP, YEATS4/GAS41, VPS72/YL1 and MEAF6. May also participate in the formation of NuA4 related complexes which lack the KAT5/TIP60 catalytic subunit, but which include the SWI/SNF related protein SRCAP. The NuA4 complex interacts with MYC. EP400 interacts with TRRAP, RUVBL1 and RUVBL2. Component of a SWR1-like complex. Interacts with ZNF42. Interacts with PHF5A. Expressed in brain, thymus, lung, liver, spleen, kidney, colon and bone marrow.

It localises to the nucleus. In terms of biological role, component of the NuA4 histone acetyltransferase complex which is involved in transcriptional activation of select genes principally by acetylation of nucleosomal histones H4 and H2A. This modification may both alter nucleosome - DNA interactions and promote interaction of the modified histones with other proteins which positively regulate transcription. May be required for transcriptional activation of E2F1 and MYC target genes during cellular proliferation. The NuA4 complex ATPase and helicase activities seem to be, at least in part, contributed by the association of RUVBL1 and RUVBL2 with EP400. Component of a SWR1-like complex that specifically mediates the removal of histone H2A.Z/H2AZ1 from the nucleosome. Regulates transcriptional activity of ZNF42. In Mus musculus (Mouse), this protein is E1A-binding protein p400 (Ep400).